The sequence spans 412 residues: Histone-lysine N-methyltransferase SUV39H1 (412 aa).

The segment at Met-1–Phe-89 is interaction with SIRT1. Residues Phe-43 to His-101 form the Chromo domain. Residues Val-179–Gly-240 enclose the Pre-SET domain. Zn(2+) is bound by residues Cys-181, Cys-183, Cys-186, Cys-194, Cys-195, Cys-222, Cys-226, Cys-228, and Cys-232. In terms of domain architecture, SET spans Tyr-243 to Asn-366. Arg-254–Trp-256 serves as a coordination point for S-adenosyl-L-methionine. Residues Gly-255–Thr-377 form a mediates interaction with MECOM region. Lys-266 bears the N6-acetyllysine mark. S-adenosyl-L-methionine is bound by residues Tyr-297 and Asn-323–His-324. Cys-326 is a binding site for Zn(2+). Phosphoserine is present on Ser-391. Positions Val-396–Phe-412 constitute a Post-SET domain. Residues Cys-400, Cys-402, and Cys-407 each contribute to the Zn(2+) site.

It belongs to the class V-like SAM-binding methyltransferase superfamily. Histone-lysine methyltransferase family. Suvar3-9 subfamily. In terms of assembly, interacts with H3 and H4 histones. Interacts with GFI1B, DNMT3B, CBX1, CBX4, CCAR2, MBD1, RUNX1, RUNX3, MYOD1, SMAD5 and RB1. Interacts with SBF1 through the SET domain. Interacts with HDAC1 and HDAC2 through the N-terminus and associates with the core histone deacetylase complex composed of HDAC1, HDAC2, RBBP4 and RBBP7. Component of the eNoSC complex, composed of SIRT1, SUV39H1 and RRP8. Interacts (via SET domain) with MECOM; enhances MECOM transcriptional repression activity. Interacts with LMNA; the interaction increases stability of SUV39H1. The large PER complex involved in the histone methylation is composed of at least PER2, CBX3, TRIM28, SUV39H1 and/or SUV39H2; CBX3 mediates the formation of the complex. As to quaternary structure, (Microbial infection) Interacts with HTLV-1 Tax protein, leading to abrogate Tax transactivation of HTLV-1 LTR. In terms of processing, phosphorylated on serine residues, and to a lesser degree, on threonine residues. The phosphorylated form is stabilized by SBF1 and is less active in its transcriptional repressor function. Ubiquitinated by the DCX(DCAF13) E3 ubiquitin ligase complex, leading to its degradation. Post-translationally, acetylated at Lys-266, leading to inhibition of enzyme activity. SIRT1-mediated deacetylation relieves this inhibition. In terms of processing, (Microbial infection) A higher molecular weight form is also seen in M.bovis infected cells.

The protein localises to the nucleus. Its subcellular location is the nucleus lamina. The protein resides in the nucleoplasm. It localises to the chromosome. It is found in the centromere. The protein localises to the cytoplasmic vesicle. Its subcellular location is the phagosome lumen. The protein resides in the cell membrane. The enzyme catalyses L-lysyl(9)-[histone H3] + 3 S-adenosyl-L-methionine = N(6),N(6),N(6)-trimethyl-L-lysyl(9)-[histone H3] + 3 S-adenosyl-L-homocysteine + 3 H(+). Its activity is regulated as follows. Inhibited by S-adenosyl-L-homocysteine. Negatively regulated by CCAR2. Histone methyltransferase that specifically trimethylates 'Lys-9' of histone H3 using monomethylated H3 'Lys-9' as substrate. Also weakly methylates histone H1 (in vitro). H3 'Lys-9' trimethylation represents a specific tag for epigenetic transcriptional repression by recruiting HP1 (CBX1, CBX3 and/or CBX5) proteins to methylated histones. Mainly functions in heterochromatin regions, thereby playing a central role in the establishment of constitutive heterochromatin at pericentric and telomere regions. H3 'Lys-9' trimethylation is also required to direct DNA methylation at pericentric repeats. SUV39H1 is targeted to histone H3 via its interaction with RB1 and is involved in many processes, such as repression of MYOD1-stimulated differentiation, regulation of the control switch for exiting the cell cycle and entering differentiation, repression by the PML-RARA fusion protein, BMP-induced repression, repression of switch recombination to IgA and regulation of telomere length. Component of the eNoSC (energy-dependent nucleolar silencing) complex, a complex that mediates silencing of rDNA in response to intracellular energy status and acts by recruiting histone-modifying enzymes. The eNoSC complex is able to sense the energy status of cell: upon glucose starvation, elevation of NAD(+)/NADP(+) ratio activates SIRT1, leading to histone H3 deacetylation followed by dimethylation of H3 at 'Lys-9' (H3K9me2) by SUV39H1 and the formation of silent chromatin in the rDNA locus. Recruited by the large PER complex to the E-box elements of the circadian target genes such as PER2 itself or PER1, contributes to the conversion of local chromatin to a heterochromatin-like repressive state through H3 'Lys-9' trimethylation. In terms of biological role, (Microbial infection) Plays a role in defense against mycobacterial infections. Methylates M.tuberculosis HupB on 'Lys-140', probably methylates HupB of M.bovis also. Methylation has an inhibitory effect on mycobacterial growth in the host. Macrophages expressing about 60% SUV39H1 are slightly more susceptible to M.bovis or M.tuberculosis infection. Chaetocin (an inhibitor of this enzyme) increases macrophage survival of M.tuberculosis. This protein inhibits biofilm formation by M.tuberculosis via 'Lys-140' trimethylation. This is Histone-lysine N-methyltransferase SUV39H1 (SUV39H1) from Homo sapiens (Human).